The following is a 376-amino-acid chain: UDP-N-acetylglucosamine--N-acetylmuramyl-(pentapeptide) pyrophosphoryl-undecaprenol N-acetylglucosamine transferase (376 aa).

UDP-N-acetyl-alpha-D-glucosamine is bound by residues 11–13 (TGG), Asn117, Arg160, Ser208, and Gln310.

This sequence belongs to the glycosyltransferase 28 family. MurG subfamily.

It localises to the cell inner membrane. It carries out the reaction di-trans,octa-cis-undecaprenyl diphospho-N-acetyl-alpha-D-muramoyl-L-alanyl-D-glutamyl-meso-2,6-diaminopimeloyl-D-alanyl-D-alanine + UDP-N-acetyl-alpha-D-glucosamine = di-trans,octa-cis-undecaprenyl diphospho-[N-acetyl-alpha-D-glucosaminyl-(1-&gt;4)]-N-acetyl-alpha-D-muramoyl-L-alanyl-D-glutamyl-meso-2,6-diaminopimeloyl-D-alanyl-D-alanine + UDP + H(+). It functions in the pathway cell wall biogenesis; peptidoglycan biosynthesis. In terms of biological role, cell wall formation. Catalyzes the transfer of a GlcNAc subunit on undecaprenyl-pyrophosphoryl-MurNAc-pentapeptide (lipid intermediate I) to form undecaprenyl-pyrophosphoryl-MurNAc-(pentapeptide)GlcNAc (lipid intermediate II). This chain is UDP-N-acetylglucosamine--N-acetylmuramyl-(pentapeptide) pyrophosphoryl-undecaprenol N-acetylglucosamine transferase, found in Rickettsia peacockii (strain Rustic).